A 357-amino-acid polypeptide reads, in one-letter code: UPF0283 membrane protein BSUIS_A1077 (357 aa).

Residues 1 to 36 (MSDKTPRKPTAFRLEQPARVSAASEQEEPRHPRAVK) are disordered. The segment covering 27–36 (EEPRHPRAVK) has biased composition (basic and acidic residues). A run of 2 helical transmembrane segments spans residues 78–98 (ILFG…TEDL) and 109–129 (LGWT…AIIL).

Belongs to the UPF0283 family.

Its subcellular location is the cell inner membrane. This chain is UPF0283 membrane protein BSUIS_A1077, found in Brucella suis (strain ATCC 23445 / NCTC 10510).